The following is a 364-amino-acid chain: Anhydro-N-acetylmuramic acid kinase (364 aa).

11-18 provides a ligand contact to ATP; that stretch reads GSSLDGID.

Belongs to the anhydro-N-acetylmuramic acid kinase family.

It catalyses the reaction 1,6-anhydro-N-acetyl-beta-muramate + ATP + H2O = N-acetyl-D-muramate 6-phosphate + ADP + H(+). Its pathway is amino-sugar metabolism; 1,6-anhydro-N-acetylmuramate degradation. It functions in the pathway cell wall biogenesis; peptidoglycan recycling. In terms of biological role, catalyzes the specific phosphorylation of 1,6-anhydro-N-acetylmuramic acid (anhMurNAc) with the simultaneous cleavage of the 1,6-anhydro ring, generating MurNAc-6-P. Is required for the utilization of anhMurNAc either imported from the medium or derived from its own cell wall murein, and thus plays a role in cell wall recycling. The protein is Anhydro-N-acetylmuramic acid kinase of Pseudomonas savastanoi pv. phaseolicola (strain 1448A / Race 6) (Pseudomonas syringae pv. phaseolicola (strain 1448A / Race 6)).